We begin with the raw amino-acid sequence, 104 residues long: Flagellar hook-basal body complex protein FliE (104 aa).

It belongs to the FliE family.

It is found in the bacterial flagellum basal body. In Enterobacter sp. (strain 638), this protein is Flagellar hook-basal body complex protein FliE.